The chain runs to 688 residues: MLESERPERDMEEEGEESNEEEEEEGMSFSDPEGFEDDISDEELLGDILKDRPQEADGIDSVIVVDNVPQVGPDRLEKLKNVIVKIFSKFGKLTNEFYPQAEGSTKGYIFLEYALPAQAQDAVKNADGYKLDKQHTFRVNLFTDFDKYMVIGDEWDVPEKQPFKDFGNLRSWLEDPDCRDQFSVIYESGDRTSIFWTDVKEPVPVEERARWTETYVRWSPKGTYLATFHQRGIALWGGEKFKQIQRFSHQGVQLIDFSPCERYLVTFSPLMDTKEEPQAIIIWDILTGHNKRGFHCESSAHWPIFKWSHDGKFFARMTLDTLSIYETPSMGLLDKKSLKITGIKDFSWSPGGNIIAFWVPEDKDIPARVTLMQMPTRQEIRVRNLFNVVDCKLHWQKNGDYLCVKVDRTPKGTQGMVTNFEIFRMREKQVPVDVVEMKDGIIAFAWEPNGSKFAVLHGEVPRISVSFYHVKNNGKIELIKMYDKQQANTIFWSPQGQFLVLAGLRSMNGALAFVDTSDCTIMNIAEHYTASDVEWDPTGRYVITSVSWWSHKVDNAYWMWTFQGRLLQKNNKDRFCQLLWRPRPPSLLSQDQIKQIKKDLKKYSKIFEQKDRLSQTKASKELIERRRAMMEEYKTYREMATKLYMEQKTARLEIRGGVDTDLLDSNVEDWEEETIEFFVTEEIIPVEE.

A disordered region spans residues 1–43 (MLESERPERDMEEEGEESNEEEEEEGMSFSDPEGFEDDISDEE). Acidic residues-rich tracts occupy residues 10 to 26 (DMEE…EEEG) and 33 to 43 (EGFEDDISDEE). In terms of domain architecture, RRM spans 61–144 (SVIVVDNVPQ…HTFRVNLFTD (84 aa)). WD repeat units lie at residues 164-206 (KDFG…VPVE), 208-246 (RARW…QIQR), 248-293 (SHQG…NKRG), 297-335 (ESSA…LLDK), 338-373 (LKIT…TLMQ), 436-492 (EMKD…TIFW), 525-570 (AEHY…LQKN), and 635-680 (TYRE…FFVT). A coiled-coil region spans residues 589–640 (SQDQIKQIKKDLKKYSKIFEQKDRLSQTKASKELIERRRAMMEEYKTYREMA).

Belongs to the eIF-3 subunit B family. Component of the eukaryotic translation initiation factor 3 (eIF-3) complex, which is composed of 13 subunits: eif3a, eif3b, eif3c, eif3d, eif3e, eif3f, eif3g, eif3h, eif3i, eif3j, eif3k, eif3l and eif3m.

It is found in the cytoplasm. The protein localises to the stress granule. Functionally, RNA-binding component of the eukaryotic translation initiation factor 3 (eIF-3) complex, which is involved in protein synthesis of a specialized repertoire of mRNAs and, together with other initiation factors, stimulates binding of mRNA and methionyl-tRNAi to the 40S ribosome. The eIF-3 complex specifically targets and initiates translation of a subset of mRNAs involved in cell proliferation. This is Eukaryotic translation initiation factor 3 subunit B (eif3b) from Xenopus laevis (African clawed frog).